A 577-amino-acid polypeptide reads, in one-letter code: Proline--tRNA ligase (577 aa).

This sequence belongs to the class-II aminoacyl-tRNA synthetase family. ProS type 1 subfamily. In terms of assembly, homodimer.

The protein resides in the cytoplasm. It catalyses the reaction tRNA(Pro) + L-proline + ATP = L-prolyl-tRNA(Pro) + AMP + diphosphate. Functionally, catalyzes the attachment of proline to tRNA(Pro) in a two-step reaction: proline is first activated by ATP to form Pro-AMP and then transferred to the acceptor end of tRNA(Pro). As ProRS can inadvertently accommodate and process non-cognate amino acids such as alanine and cysteine, to avoid such errors it has two additional distinct editing activities against alanine. One activity is designated as 'pretransfer' editing and involves the tRNA(Pro)-independent hydrolysis of activated Ala-AMP. The other activity is designated 'posttransfer' editing and involves deacylation of mischarged Ala-tRNA(Pro). The misacylated Cys-tRNA(Pro) is not edited by ProRS. The polypeptide is Proline--tRNA ligase (Thermotoga maritima (strain ATCC 43589 / DSM 3109 / JCM 10099 / NBRC 100826 / MSB8)).